We begin with the raw amino-acid sequence, 188 residues long: MKHKVGILGGTFDPPHLAHLQMAEVAKQQLNLEKVLFLPNKIPPHKHISGMASNDARVEMLRLMIEGIDYFEVDLRELKRAGKSYTYDTMRDMISEQPNTDFYFIIGGDMVEYLPKWYHIEDLVKMVTFVGVHRPHYQAEVPYDVVNIDMPETTISSTEIRNNIEHAEAFLPEKVWLYIKEHQLYGKK.

This sequence belongs to the NadD family.

The catalysed reaction is nicotinate beta-D-ribonucleotide + ATP + H(+) = deamido-NAD(+) + diphosphate. It participates in cofactor biosynthesis; NAD(+) biosynthesis; deamido-NAD(+) from nicotinate D-ribonucleotide: step 1/1. Its function is as follows. Catalyzes the reversible adenylation of nicotinate mononucleotide (NaMN) to nicotinic acid adenine dinucleotide (NaAD). The polypeptide is Probable nicotinate-nucleotide adenylyltransferase (Listeria welshimeri serovar 6b (strain ATCC 35897 / DSM 20650 / CCUG 15529 / CIP 8149 / NCTC 11857 / SLCC 5334 / V8)).